Here is a 324-residue protein sequence, read N- to C-terminus: tRNA U34 carboxymethyltransferase (324 aa).

Carboxy-S-adenosyl-L-methionine is bound by residues lysine 92, tryptophan 106, lysine 111, glycine 131, aspartate 153–threonine 155, isoleucine 182–glutamate 183, methionine 197, tyrosine 201, and arginine 316.

Belongs to the class I-like SAM-binding methyltransferase superfamily. CmoB family. In terms of assembly, homotetramer.

It catalyses the reaction carboxy-S-adenosyl-L-methionine + 5-hydroxyuridine(34) in tRNA = 5-carboxymethoxyuridine(34) in tRNA + S-adenosyl-L-homocysteine + H(+). In terms of biological role, catalyzes carboxymethyl transfer from carboxy-S-adenosyl-L-methionine (Cx-SAM) to 5-hydroxyuridine (ho5U) to form 5-carboxymethoxyuridine (cmo5U) at position 34 in tRNAs. This chain is tRNA U34 carboxymethyltransferase, found in Proteus mirabilis (strain HI4320).